An 84-amino-acid chain; its full sequence is Putative defensin-like protein 114 (84 aa).

The first 24 residues, 1–24 (MAITKKCFAAFVLILLFVMPFVYC), serve as a signal peptide directing secretion. Disulfide bonds link C41–C81, C47–C69, C54–C79, and C58–C80.

The protein belongs to the DEFL family.

The protein localises to the secreted. This is Putative defensin-like protein 114 from Arabidopsis thaliana (Mouse-ear cress).